Here is a 254-residue protein sequence, read N- to C-terminus: Large ribosomal subunit protein uL15m (254 aa).

Residues 1–78 (MFNILSRVCR…GSGQRRGRRI (78 aa)) constitute a mitochondrion transit peptide. The tract at residues 44–104 (NYQSKKRVGR…KVGHSTGHLK (61 aa)) is disordered. Over residues 64–79 (GRGHKGSGQRRGRRIK) the composition is skewed to basic residues.

The protein belongs to the universal ribosomal protein uL15 family. As to quaternary structure, component of the mitochondrial large ribosomal subunit (mt-LSU). Mature yeast 74S mitochondrial ribosomes consist of a small (37S) and a large (54S) subunit. The 37S small subunit contains a 15S ribosomal RNA (15S mt-rRNA) and at least 32 different proteins. The 54S large subunit contains a 21S rRNA (21S mt-rRNA) and at least 45 different proteins.

It localises to the mitochondrion. Functionally, component of the mitochondrial ribosome (mitoribosome), a dedicated translation machinery responsible for the synthesis of mitochondrial genome-encoded proteins, including at least some of the essential transmembrane subunits of the mitochondrial respiratory chain. The mitoribosomes are attached to the mitochondrial inner membrane and translation products are cotranslationally integrated into the membrane. This is Large ribosomal subunit protein uL15m (mrpl10) from Schizosaccharomyces pombe (strain 972 / ATCC 24843) (Fission yeast).